Here is a 269-residue protein sequence, read N- to C-terminus: Seven in absentia homolog 3 (269 aa).

The SIAH-type; degenerate zinc finger occupies 61–132 (GSFHPHHLSH…VVPHLRQIHR (72 aa)). The Zn(2+) site is built by C107, C114, H126, and H131.

The protein belongs to the SINA (Seven in absentia) family.

The protein localises to the mitochondrion. Functionally, negative regulator of PRKN translocation to damaged mitochondria. Acts probably by destabilizing PINK1 protein, hence inhibiting PRKN targeting to dysfunctional depolarized mitochondria. This chain is Seven in absentia homolog 3 (SIAH3), found in Homo sapiens (Human).